The chain runs to 109 residues: Hainantoxin-XVIII.2 (109 aa).

The N-terminal stretch at 1–18 (MKLSIIIIVTSLVIAVVA) is a signal peptide. The propeptide occupies 19 to 46 (FPSKDSKAIENDKTEQRMEIVVQETARA). 4 cysteine pairs are disulfide-bonded: C47/C62, C55/C68, C59/C108, and C61/C81.

It belongs to the neurotoxin 25 family. F7 subfamily. In terms of tissue distribution, expressed by the venom gland.

The protein resides in the secreted. Functionally, putative ion channel inhibitor. The polypeptide is Hainantoxin-XVIII.2 (Cyriopagopus hainanus (Chinese bird spider)).